A 355-amino-acid polypeptide reads, in one-letter code: Guanine nucleotide-binding protein G(o) subunit alpha (355 aa).

The span at 1 to 17 (MGCASSAEERAAPSAQQ) shows a compositional bias: low complexity. The tract at residues 1 to 24 (MGCASSAEERAAPSAQQADREKLK) is disordered. Residue Gly-2 is the site of N-myristoyl glycine attachment. A lipid anchor (S-palmitoyl cysteine) is attached at Cys-3. Residues 32–355 (KDIKLLLLGA…ANNLRGCGLY (324 aa)) form the G-alpha domain. Residues 35-48 (KLLLLGAGESGKST) are G1 motif. GTP is bound by residues 40 to 47 (GAGESGKS), 176 to 182 (LRTRVKT), 201 to 205 (DVGRG), 201 to 206 (DVGRGQ), 271 to 274 (NKKD), and Ala-327. Residues Ser-47 and Thr-182 each contribute to the Mg(2+) site. Residues 174 to 182 (DILRTRVKT) form a G2 motif region. Residues 197-206 (FKLFDVGRGQ) are G3 motif. The segment at 267–274 (ILFLNKKD) is G4 motif. Residues 326 to 330 (TATDT) form a G5 motif region.

The protein belongs to the G-alpha family. G(i/o/t/z) subfamily. In terms of assembly, g proteins are composed of 3 units; alpha, beta and gamma. The alpha chain contains the guanine nucleotide binding site.

Guanine nucleotide-binding proteins (G proteins) are involved as modulators or transducers in various transmembrane signaling systems. The G(o) protein function is not clear. The sequence is that of Guanine nucleotide-binding protein G(o) subunit alpha from Manduca sexta (Tobacco hawkmoth).